Reading from the N-terminus, the 327-residue chain is Complex I intermediate-associated protein 30, mitochondrial (327 aa).

The N-terminal 24 residues, 1 to 24, are a transit peptide targeting the mitochondrion; it reads MALVHKLLRGTYILRKFSKPASAL. Residues 42–63 form a disordered region; that stretch reads PVASPGKASSQRKTEGDLQGDH. Residues 53–63 are compositionally biased toward basic and acidic residues; that stretch reads RKTEGDLQGDH. Ser-318 bears the Phosphoserine mark.

This sequence belongs to the CIA30 family. Part of the mitochondrial complex I assembly/MCIA complex that comprises at least the core subunits TMEM126B, NDUFAF1, ECSIT and ACAD9 and complement subunits such as COA1 and TMEM186. Interacts with ECSIT. Interacts with ACAD9. At early stages of complex I assembly, it is found in intermediate subcomplexes that contain different subunits including NDUFB6, NDUFA6, NDUFA9, NDUFS3, NDUFS7, ND1, ND2 and ND3. Interacts with TMEM70 and TMEM242.

The protein localises to the mitochondrion. The protein resides in the mitochondrion matrix. In terms of biological role, as part of the MCIA complex, involved in the assembly of the mitochondrial complex I. The sequence is that of Complex I intermediate-associated protein 30, mitochondrial from Pongo pygmaeus (Bornean orangutan).